Consider the following 133-residue polypeptide: Ribosome-binding factor A (133 aa).

The protein belongs to the RbfA family. As to quaternary structure, monomer. Binds 30S ribosomal subunits, but not 50S ribosomal subunits or 70S ribosomes.

It localises to the cytoplasm. Its function is as follows. One of several proteins that assist in the late maturation steps of the functional core of the 30S ribosomal subunit. Associates with free 30S ribosomal subunits (but not with 30S subunits that are part of 70S ribosomes or polysomes). Required for efficient processing of 16S rRNA. May interact with the 5'-terminal helix region of 16S rRNA. The protein is Ribosome-binding factor A of Alteromonas mediterranea (strain DSM 17117 / CIP 110805 / LMG 28347 / Deep ecotype).